The chain runs to 135 residues: Small ribosomal subunit protein uS11 (135 aa).

The disordered stretch occupies residues 1-20; sequence MGRQRQQRSRGSRSRRRVRK.

It belongs to the universal ribosomal protein uS11 family. Part of the 30S ribosomal subunit. Interacts with proteins S7 and S18. Binds to IF-3.

Functionally, located on the platform of the 30S subunit, it bridges several disparate RNA helices of the 16S rRNA. Forms part of the Shine-Dalgarno cleft in the 70S ribosome. This chain is Small ribosomal subunit protein uS11, found in Rubrobacter xylanophilus (strain DSM 9941 / JCM 11954 / NBRC 16129 / PRD-1).